Here is a 224-residue protein sequence, read N- to C-terminus: uncharacterized protein (224 aa).

This is an uncharacterized protein from Listeria innocua serovar 6a (strain ATCC BAA-680 / CLIP 11262).